Here is a 138-residue protein sequence, read N- to C-terminus: Acidic phospholipase A2 CoaPLA2 (138 aa).

The signal sequence occupies residues 1 to 16; it reads MRTLWIVAVLLLGVEG. Disulfide bonds link Cys42/Cys131, Cys44/Cys60, Cys59/Cys111, Cys65/Cys138, Cys66/Cys104, Cys73/Cys97, and Cys91/Cys102. 3 residues coordinate Ca(2+): Tyr43, Gly45, and Gly47. Residue His63 is part of the active site. Asp64 is a Ca(2+) binding site. Residue Asp105 is part of the active site.

The protein belongs to the phospholipase A2 family. Group II subfamily. D49 sub-subfamily. Homodimer. Ca(2+) is required as a cofactor. Expressed by the venom gland.

It is found in the secreted. It catalyses the reaction a 1,2-diacyl-sn-glycero-3-phosphocholine + H2O = a 1-acyl-sn-glycero-3-phosphocholine + a fatty acid + H(+). Its function is as follows. Snake venom phospholipase A2 (PLA2) that shows very low inhibition of ADP-induced platelet aggregation in platelet-rich plasma of human, rabbit and guinea pig. Shows edema-inducing activity and myotoxicity. PLA2 catalyzes the calcium-dependent hydrolysis of the 2-acyl groups in 3-sn-phosphoglycerides. The polypeptide is Acidic phospholipase A2 CoaPLA2 (Crotalus lutosus abyssus (Grand Canyon rattlesnake)).